The sequence spans 116 residues: Calcium-regulated OB-fold protein CarO (116 aa).

An N-terminal signal peptide occupies residues 1–21 (MKLRHLPLIAAIGLFSTVTLA).

The protein localises to the periplasm. Plays a role in intracellular Ca(2+) homeostasis. Involved in cell protection against oxidative stress in strain 25W. The protein is Calcium-regulated OB-fold protein CarO of Pseudomonas aeruginosa (strain ATCC 15692 / DSM 22644 / CIP 104116 / JCM 14847 / LMG 12228 / 1C / PRS 101 / PAO1).